A 52-amino-acid polypeptide reads, in one-letter code: Dibenzothiophene metabolism operon protein NahQ/DoxH (52 aa).

Its pathway is aromatic compound metabolism; naphthalene degradation. Its function is as follows. May be involved in the conversion of 2-hydroxy-4-(2'-oxo-3,5-cyclohexadienyl)-buta-2,4-dienoate to cis-O-hydroxybenzylidenepyruvate. DoxH and DoxJ encode different enzymes that may have interchangeable functions. The protein is Dibenzothiophene metabolism operon protein NahQ/DoxH (nahQ) of Pseudomonas putida (Arthrobacter siderocapsulatus).